Reading from the N-terminus, the 166-residue chain is Lipoprotein signal peptidase (166 aa).

A run of 3 helical transmembrane segments spans residues 10–30, 68–88, and 94–114; these read LIWLLLSALVIGLDQWSKAWV, WQLWFFTALAMGISGLLAFWL, and GHWRSALPYALVIGGAIGNVI. Residues Asp-124 and Asp-142 contribute to the active site. Residues 138–158 traverse the membrane as a helical segment; the sequence is FNIADSAIVGGAIGIAVFGLF.

This sequence belongs to the peptidase A8 family.

The protein resides in the cell inner membrane. The enzyme catalyses Release of signal peptides from bacterial membrane prolipoproteins. Hydrolyzes -Xaa-Yaa-Zaa-|-(S,diacylglyceryl)Cys-, in which Xaa is hydrophobic (preferably Leu), and Yaa (Ala or Ser) and Zaa (Gly or Ala) have small, neutral side chains.. It functions in the pathway protein modification; lipoprotein biosynthesis (signal peptide cleavage). Its function is as follows. This protein specifically catalyzes the removal of signal peptides from prolipoproteins. The protein is Lipoprotein signal peptidase of Xanthomonas oryzae pv. oryzae (strain MAFF 311018).